Here is a 327-residue protein sequence, read N- to C-terminus: Meiotic coiled-coil protein 6 (327 aa).

Residues 66-188 (DAFERDSTQR…TETKEMNKIK (123 aa)) adopt a coiled-coil conformation. Over residues 175–199 (RRMETETKEMNKIKPKNDSESDRFK) the composition is skewed to basic and acidic residues. The tract at residues 175–234 (RRMETETKEMNKIKPKNDSESDRFKRNSQSLSQQSPLLDVHSPDNSNHRTMLNINNSSPI) is disordered. Over residues 202–212 (SQSLSQQSPLL) the composition is skewed to low complexity. Over residues 217-232 (PDNSNHRTMLNINNSS) the composition is skewed to polar residues. Residues 243–297 (NEVKNRISRLQKTFADLENQHHSFQQICQTLRKRLENDSSTTKQRLSKLEEIIRN) are a coiled coil.

In terms of assembly, interacts with alp4, kms1 and mbo1.

It is found in the nucleus. The protein localises to the cytoplasm. The protein resides in the cytoskeleton. It localises to the microtubule organizing center. Its subcellular location is the spindle pole body. Has a role in meiotic nuclear oscillation and recombination. Required to remodel astral microtubules into the 'horsetail' astral array maintaining the 'horsetail' nuclear movement. Promotes homologous paring of chromosomes during this movement. This is Meiotic coiled-coil protein 6 (mcp6) from Schizosaccharomyces pombe (strain 972 / ATCC 24843) (Fission yeast).